The sequence spans 43 residues: Protein PsbN (43 aa).

The helical transmembrane segment at 7 to 27 (ITIFLSCFLVGVTGYALYTAF) threads the bilayer.

It belongs to the PsbN family.

The protein resides in the plastid. The protein localises to the chloroplast thylakoid membrane. May play a role in photosystem I and II biogenesis. The polypeptide is Protein PsbN (Klebsormidium bilatum (Filamentous green alga)).